A 547-amino-acid polypeptide reads, in one-letter code: Probable ATP-dependent RNA helicase DDX56 (547 aa).

A Q motif motif is present at residues 7–35; sequence LGFEHMGLDPRLLQAVTDLGWSRPTLIQE. Residues 38 to 218 enclose the Helicase ATP-binding domain; that stretch reads IPLALEGKDL…ELILHNPVTL (181 aa). 51–58 contributes to the ATP binding site; that stretch reads ARTGSGKT. Ser126 carries the post-translational modification Phosphoserine. Position 141 is a phosphothreonine (Thr141). The DEAD box motif lies at 166-169; that stretch reads DEAD. The Helicase C-terminal domain maps to 230 to 424; it reads QLQQFQVVCE…PYQFRMEEIE (195 aa). Composition is skewed to basic residues over residues 506–525 and 532–547; these read RPHK…KRAK and SFKH…AKPS. The segment at 506–547 is disordered; the sequence is RPHKKRKKLSSSCRKAKRAKSQNPLRSFKHKGKKFRPTAKPS. Position 532 is a phosphoserine (Ser532).

The protein belongs to the DEAD box helicase family. DDX56/DBP9 subfamily. As to quaternary structure, may form homooligomeric complexes. Interacts with IRF3. Interacts with OCT4 and POU5F1. In terms of assembly, (Microbial infection) Interacts with West Nile virus capsid protein C. (Microbial infection) Interacts with foot-and-mouth disease virus protein 3A; this interaction leads to inhibition of type I interferon production. As to quaternary structure, (Microbial infection) Interacts with EMCV protein 3C; this interaction leads to inhibition of type I interferon production. Detected in heart, brain, liver, pancreas, placenta and lung.

It is found in the nucleus. Its subcellular location is the nucleolus. It carries out the reaction ATP + H2O = ADP + phosphate + H(+). Functionally, nucleolar RNA helicase that plays a role in various biological processes including innate immunity, ribosome biogenesis or nucleolus organization. Plays an essential role in maintaining nucleolar integrity in planarian stem cells. Maintains embryonic stem cells proliferation by conventional regulation of ribosome assembly and interaction with OCT4 and POU5F1 complex. Regulates antiviral innate immunity by inhibiting the virus-triggered signaling nuclear translocation of IRF3. Mechanistically, acts by disrupting the interaction between IRF3 and importin IPO5. May play a role in later stages of the processing of the pre-ribosomal particles leading to mature 60S ribosomal subunits. Has intrinsic ATPase activity. Its function is as follows. (Microbial infection) Helicase activity is important for packaging viral RNA into virions during West Nile virus infection. In terms of biological role, (Microbial infection) Plays a positive role in foot-and-mouth disease virus replication by inhibiting the phosphorylation of IRF3 leading to inhibition of type I interferon. (Microbial infection) Plays a positive role in EMCV replication by interrupting IRF3 phosphorylation and its nucleus translocation. The chain is Probable ATP-dependent RNA helicase DDX56 (DDX56) from Homo sapiens (Human).